Here is a 294-residue protein sequence, read N- to C-terminus: UDP-3-O-acyl-N-acetylglucosamine deacetylase (294 aa).

His-75, His-232, and Asp-236 together coordinate Zn(2+). His-259 acts as the Proton donor in catalysis.

The protein belongs to the LpxC family. The cofactor is Zn(2+).

The catalysed reaction is a UDP-3-O-[(3R)-3-hydroxyacyl]-N-acetyl-alpha-D-glucosamine + H2O = a UDP-3-O-[(3R)-3-hydroxyacyl]-alpha-D-glucosamine + acetate. Its pathway is glycolipid biosynthesis; lipid IV(A) biosynthesis; lipid IV(A) from (3R)-3-hydroxytetradecanoyl-[acyl-carrier-protein] and UDP-N-acetyl-alpha-D-glucosamine: step 2/6. Its function is as follows. Catalyzes the hydrolysis of UDP-3-O-myristoyl-N-acetylglucosamine to form UDP-3-O-myristoylglucosamine and acetate, the committed step in lipid A biosynthesis. The polypeptide is UDP-3-O-acyl-N-acetylglucosamine deacetylase (Campylobacter curvus (strain 525.92)).